A 198-amino-acid chain; its full sequence is Nucleoid occlusion factor SlmA (198 aa).

An HTH tetR-type domain is found at 10-70 (NRREEILQSL…SLIEFIEDSL (61 aa)). Positions 33–52 (TTAKLAASVGVSEAALYRHF) form a DNA-binding region, H-T-H motif. Residues 117–144 (EQDRLQGRINQLFERIEAQLRQVLREKR) adopt a coiled-coil conformation.

It belongs to the nucleoid occlusion factor SlmA family. In terms of assembly, homodimer. Interacts with FtsZ.

It is found in the cytoplasm. Its subcellular location is the nucleoid. Functionally, required for nucleoid occlusion (NO) phenomenon, which prevents Z-ring formation and cell division over the nucleoid. Acts as a DNA-associated cell division inhibitor that binds simultaneously chromosomal DNA and FtsZ, and disrupts the assembly of FtsZ polymers. SlmA-DNA-binding sequences (SBS) are dispersed on non-Ter regions of the chromosome, preventing FtsZ polymerization at these regions. This Escherichia coli O127:H6 (strain E2348/69 / EPEC) protein is Nucleoid occlusion factor SlmA.